A 352-amino-acid polypeptide reads, in one-letter code: Coproporphyrin III ferrochelatase (352 aa).

Fe-coproporphyrin III is bound by residues S52 and Y121. Positions 181 and 269 each coordinate Fe(2+).

It belongs to the ferrochelatase family.

Its subcellular location is the cytoplasm. It carries out the reaction Fe-coproporphyrin III + 2 H(+) = coproporphyrin III + Fe(2+). The protein operates within porphyrin-containing compound metabolism; protoheme biosynthesis. Its function is as follows. Involved in coproporphyrin-dependent heme b biosynthesis. Catalyzes the insertion of ferrous iron into coproporphyrin III to form Fe-coproporphyrin III. This chain is Coproporphyrin III ferrochelatase, found in Nocardia farcinica (strain IFM 10152).